The chain runs to 170 residues: Small ribosomal subunit protein bS18c (170 aa).

Disordered regions lie at residues 1-60 (MYTS…GPGD) and 149-170 (NRNL…SSDC). Repeats lie at residues 4 to 10 (SKQPFLK), 11 to 17 (SKQPFSK), 18 to 24 (SEQPFSK), 25 to 31 (SEQPFRK), 32 to 38 (SKQTFRK), 39 to 45 (FKQPFRK), and 46 to 52 (SKQPFRR). The 7 X 7 AA tandem repeats stretch occupies residues 4–52 (SKQPFLKSKQPFSKSEQPFSKSEQPFRKSKQTFRKFKQPFRKSKQPFRR). Over residues 13–26 (QPFSKSEQPFSKSE) the composition is skewed to polar residues. The segment covering 30–55 (RKSKQTFRKFKQPFRKSKQPFRRRPR) has biased composition (basic residues).

The protein belongs to the bacterial ribosomal protein bS18 family. Part of the 30S ribosomal subunit.

The protein resides in the plastid. Its subcellular location is the chloroplast. The polypeptide is Small ribosomal subunit protein bS18c (rps18) (Secale cereale (Rye)).